We begin with the raw amino-acid sequence, 794 residues long: Inactive zinc metalloprotease C354.09c (794 aa).

Residues 1–56 (MTDEKHVYVPPPKDPPSYEEVALHSALNNSAPPNDGEQNETSMEEMEIIEPPSEDS) form a disordered region. A helical membrane pass occupies residues 91 to 111 (IPFQFLYLAVIATVIILASYY).

It belongs to the peptidase M28 family. M28B subfamily.

It is found in the membrane. This Schizosaccharomyces pombe (strain 972 / ATCC 24843) (Fission yeast) protein is Inactive zinc metalloprotease C354.09c.